The chain runs to 458 residues: Bifunctional thioredoxin reductase/thioredoxin (458 aa).

Residues 1 to 321 are thioredoxin reductase; the sequence is MNTTPSAHET…LAEHAGSKAN (321 aa). FAD contacts are provided by residues 19-22, 41-48, asparagine 57, and valine 90; these read SGPA and EGTSFGGA. Cysteine 142 and cysteine 145 form a disulfide bridge. NADP(+) contacts are provided by serine 163, histidine 182, arginine 188, isoleucine 245, and tyrosine 265. Residues aspartate 285 and 292 to 295 each bind FAD; that span reads RQAI. Residue arginine 292 participates in NADP(+) binding. The interval 322–347 is linker; sequence ETTEETGDVDSTDTTDWSTAMTDAKN. In terms of domain architecture, Thioredoxin spans 341–455; the sequence is AMTDAKNAGV…LLRDLSDVVP (115 aa). Cysteine 379 and cysteine 382 are oxidised to a cystine.

This sequence in the N-terminal section; belongs to the class-II pyridine nucleotide-disulfide oxidoreductase family. Homodimer. FAD serves as cofactor.

It is found in the cytoplasm. It catalyses the reaction [thioredoxin]-dithiol + NADP(+) = [thioredoxin]-disulfide + NADPH + H(+). This is Bifunctional thioredoxin reductase/thioredoxin (trxB/A) from Mycobacterium leprae (strain TN).